The sequence spans 114 residues: Prostate stem cell antigen (114 aa).

The N-terminal stretch at methionine 1 to alanine 11 is a signal peptide. The UPAR/Ly6 domain maps to leucine 12–serine 86. 5 disulfides stabilise this stretch: cysteine 14-cysteine 39, cysteine 17-cysteine 26, cysteine 32-cysteine 57, cysteine 61-cysteine 77, and cysteine 78-cysteine 83. Asparagine 31 carries N-linked (GlcNAc...) asparagine glycosylation. The GPI-anchor amidated serine moiety is linked to residue serine 86. Positions serine 86–leucine 114 are cleaved as a propeptide — removed in mature form.

As to quaternary structure, interacts with CHRNA4. Post-translationally, N-glycosylated. In terms of tissue distribution, highly expressed in prostate (basal, secretory and neuroendocrine epithelium cells). Also found in bladder (transitional epithelium), placenta (trophoblasts), stomach (neuroendocrine cells), colon (neuroendocrine cells) and kidney (collecting ducts). Overexpressed in prostate cancers and expression is correlated with tumor stage, grade and androgen-independence. Highly expressed in prostate cancer bone metastases. Expressed in gastric epithelial cells, mainly in the isthmus (at protein level). Not detected in normal intestinal epithelium (at protein level). Expressed in brain cortex; expression is significantly increased in the front cortex of Alzheimer disease patients.

It localises to the cell membrane. Its function is as follows. May be involved in the regulation of cell proliferation. Has a cell-proliferation inhibition activity in vitro. Functionally, may act as a modulator of nicotinic acetylcholine receptors (nAChRs) activity. In vitro inhibits nicotine-induced signaling probably implicating alpha-3:beta-2- or alpha-7-containing nAChRs. In Homo sapiens (Human), this protein is Prostate stem cell antigen (PSCA).